We begin with the raw amino-acid sequence, 308 residues long: Aspartate carbamoyltransferase catalytic subunit (308 aa).

Carbamoyl phosphate contacts are provided by Arg57 and Thr58. Lys86 serves as a coordination point for L-aspartate. Residues Arg107, His135, and Gln138 each coordinate carbamoyl phosphate. L-aspartate-binding residues include Arg167 and Arg228. Residues Leu267 and Pro268 each coordinate carbamoyl phosphate.

This sequence belongs to the aspartate/ornithine carbamoyltransferase superfamily. ATCase family. In terms of assembly, heterooligomer of catalytic and regulatory chains.

The catalysed reaction is carbamoyl phosphate + L-aspartate = N-carbamoyl-L-aspartate + phosphate + H(+). Its pathway is pyrimidine metabolism; UMP biosynthesis via de novo pathway; (S)-dihydroorotate from bicarbonate: step 2/3. Functionally, catalyzes the condensation of carbamoyl phosphate and aspartate to form carbamoyl aspartate and inorganic phosphate, the committed step in the de novo pyrimidine nucleotide biosynthesis pathway. The chain is Aspartate carbamoyltransferase catalytic subunit from Methanosarcina barkeri (strain Fusaro / DSM 804).